A 122-amino-acid chain; its full sequence is MASVYENSYMIVLIFLLLGILLPVVALTLGRMLRPNKPSAAKATTYESGIEPFHDANIRFHARYYIFALLFVIFDVETLFLYPWAVAYDKLGLFALIEMLIFVVMLLVGLAYAWKKKVLQWL.

3 consecutive transmembrane segments (helical) span residues 10–30, 66–86, and 91–111; these read MIVL…LTLG, IFAL…PWAV, and LGLF…VGLA.

This sequence belongs to the complex I subunit 3 family. As to quaternary structure, NDH-1 is composed of 14 different subunits. Subunits NuoA, H, J, K, L, M, N constitute the membrane sector of the complex.

It localises to the cell membrane. It carries out the reaction a quinone + NADH + 5 H(+)(in) = a quinol + NAD(+) + 4 H(+)(out). Its function is as follows. NDH-1 shuttles electrons from NADH, via FMN and iron-sulfur (Fe-S) centers, to quinones in the respiratory chain. The immediate electron acceptor for the enzyme in this species is believed to be a menaquinone. Couples the redox reaction to proton translocation (for every two electrons transferred, four hydrogen ions are translocated across the cytoplasmic membrane), and thus conserves the redox energy in a proton gradient. The chain is NADH-quinone oxidoreductase subunit A from Bacillus cereus (strain ATCC 14579 / DSM 31 / CCUG 7414 / JCM 2152 / NBRC 15305 / NCIMB 9373 / NCTC 2599 / NRRL B-3711).